Consider the following 231-residue polypeptide: Octanoyltransferase (231 aa).

Positions 49–231 constitute a BPL/LPL catalytic domain; that stretch reads SEAAEQVWLL…KRTFSEVFGS (183 aa). Residues 87-94, 162-164, and 175-177 each bind substrate; these read RGGQITYH, AIG, and GVS. Catalysis depends on Cys-193, which acts as the Acyl-thioester intermediate.

Belongs to the LipB family.

It localises to the cytoplasm. It carries out the reaction octanoyl-[ACP] + L-lysyl-[protein] = N(6)-octanoyl-L-lysyl-[protein] + holo-[ACP] + H(+). The protein operates within protein modification; protein lipoylation via endogenous pathway; protein N(6)-(lipoyl)lysine from octanoyl-[acyl-carrier-protein]: step 1/2. In terms of biological role, catalyzes the transfer of endogenously produced octanoic acid from octanoyl-acyl-carrier-protein onto the lipoyl domains of lipoate-dependent enzymes. Lipoyl-ACP can also act as a substrate although octanoyl-ACP is likely to be the physiological substrate. The sequence is that of Octanoyltransferase from Nitrobacter winogradskyi (strain ATCC 25391 / DSM 10237 / CIP 104748 / NCIMB 11846 / Nb-255).